Here is a 514-residue protein sequence, read N- to C-terminus: 2-isopropylmalate synthase (514 aa).

The 264-residue stretch at 5–268 (LIIFDTTLRD…DVGIDTTQIV (264 aa)) folds into the Pyruvate carboxyltransferase domain. 4 residues coordinate Mn(2+): D14, H202, H204, and N239. Positions 395–514 (KFVSLSQRSE…KDDKLNPQRA (120 aa)) are regulatory domain.

Belongs to the alpha-IPM synthase/homocitrate synthase family. LeuA type 1 subfamily. Homodimer. The cofactor is Mn(2+).

Its subcellular location is the cytoplasm. The catalysed reaction is 3-methyl-2-oxobutanoate + acetyl-CoA + H2O = (2S)-2-isopropylmalate + CoA + H(+). Its pathway is amino-acid biosynthesis; L-leucine biosynthesis; L-leucine from 3-methyl-2-oxobutanoate: step 1/4. In terms of biological role, catalyzes the condensation of the acetyl group of acetyl-CoA with 3-methyl-2-oxobutanoate (2-ketoisovalerate) to form 3-carboxy-3-hydroxy-4-methylpentanoate (2-isopropylmalate). The polypeptide is 2-isopropylmalate synthase (Burkholderia cenocepacia (strain HI2424)).